The sequence spans 266 residues: GTP cyclohydrolase FolE2 (266 aa).

The protein belongs to the GTP cyclohydrolase IV family.

It carries out the reaction GTP + H2O = 7,8-dihydroneopterin 3'-triphosphate + formate + H(+). Its pathway is cofactor biosynthesis; 7,8-dihydroneopterin triphosphate biosynthesis; 7,8-dihydroneopterin triphosphate from GTP: step 1/1. In terms of biological role, converts GTP to 7,8-dihydroneopterin triphosphate. The sequence is that of GTP cyclohydrolase FolE2 from Syntrophotalea carbinolica (strain DSM 2380 / NBRC 103641 / GraBd1) (Pelobacter carbinolicus).